The sequence spans 249 residues: Probable transcriptional regulatory protein Meso_3192 (249 aa).

It belongs to the TACO1 family.

Its subcellular location is the cytoplasm. In Chelativorans sp. (strain BNC1), this protein is Probable transcriptional regulatory protein Meso_3192.